The primary structure comprises 117 residues: Ig heavy chain V region UPC10 (117 aa).

An Ig-like domain is found at 1-116 (EVKLLESGGG…WGQVTTLTVS (116 aa)).

In Mus musculus (Mouse), this protein is Ig heavy chain V region UPC10.